The following is a 1007-amino-acid chain: Sal-like protein 2 (1007 aa).

A disordered region spans residues 1–33 (MSRRKQRKPQQLISDCEGPSASENGDASEEDHP). The segment at 34–56 (QVCAKCCAQFTDPTEFLAHQNAC) adopts a C2H2-type 1; atypical zinc-finger fold. 4 disordered regions span residues 59-121 (DPPV…GEES), 137-177 (GGGL…SGHL), 220-243 (PASP…PLFS), and 286-306 (PFSA…SPAL). Low complexity predominate over residues 70-80 (ENPNNSSASSE). Residues 99-108 (PPDSGSSVPT) are compositionally biased toward polar residues. Pro residues predominate over residues 151-171 (PLPPESTPAPPPPPPPPPPPG). A Phosphoserine modification is found at Ser-243. 2 consecutive C2H2-type zinc fingers follow at residues 373 to 395 (HKCR…LRSH) and 401 to 423 (YKCN…FHRH). 2 disordered regions span residues 520–540 (KNKA…SGVA) and 610–629 (AASG…ASSG). 3 C2H2-type zinc fingers span residues 631–653 (NQCV…YGQH), 659–681 (FKCK…FVGH), and 691–713 (NSCP…VRMH). Residues 714 to 886 (LGGQIPNGGT…SALTPEGEAT (173 aa)) are disordered. Residues 734–744 (ENGSEQSTVSG) show a composition bias toward polar residues. Positions 747–757 (SFPQQQSQQPS) are enriched in low complexity. Over residues 758-782 (PEEELSEEEEEEDEEEEEDVTDEDS) the composition is skewed to acidic residues. Phosphoserine occurs at positions 797, 802, and 806. Residues 803–812 (EEASGAEEEV) show a composition bias toward acidic residues. The span at 862 to 871 (GKEEGGKPER) shows a compositional bias: basic and acidic residues. Residue Lys-911 forms a Glycyl lysine isopeptide (Lys-Gly) (interchain with G-Cter in ubiquitin) linkage. C2H2-type zinc fingers lie at residues 911-933 (KACE…QKTH) and 940-963 (FTCV…LLAH).

Belongs to the sal C2H2-type zinc-finger protein family. As to expression, highest levels in adult brain (in different areas). Lower levels in heart; very low levels in kidney and pancreas. Expressed throughout the retina and lens vesicle as well as the periocular mesenchyme.

It localises to the nucleus. Its function is as follows. Probable transcription factor that plays a role in eye development before, during, and after optic fissure closure. The protein is Sal-like protein 2 (SALL2) of Homo sapiens (Human).